Here is a 598-residue protein sequence, read N- to C-terminus: Aspartate--tRNA(Asp/Asn) ligase (598 aa).

Glutamate 177 is a binding site for L-aspartate. The segment at 201-204 (QLFK) is aspartate. Arginine 223 is an L-aspartate binding site. ATP-binding positions include 223-225 (RDE) and glutamine 232. Position 456 (histidine 456) interacts with L-aspartate. Residue glutamate 493 participates in ATP binding. Residue arginine 500 coordinates L-aspartate. 545-548 (GLDR) serves as a coordination point for ATP.

It belongs to the class-II aminoacyl-tRNA synthetase family. Type 1 subfamily. Homodimer.

Its subcellular location is the cytoplasm. The catalysed reaction is tRNA(Asx) + L-aspartate + ATP = L-aspartyl-tRNA(Asx) + AMP + diphosphate. In terms of biological role, aspartyl-tRNA synthetase with relaxed tRNA specificity since it is able to aspartylate not only its cognate tRNA(Asp) but also tRNA(Asn). Reaction proceeds in two steps: L-aspartate is first activated by ATP to form Asp-AMP and then transferred to the acceptor end of tRNA(Asp/Asn). The protein is Aspartate--tRNA(Asp/Asn) ligase of Prochlorococcus marinus (strain MIT 9301).